A 985-amino-acid chain; its full sequence is Alanine--tRNA ligase, mitochondrial (985 aa).

Residues 1–23 constitute a mitochondrion transit peptide; that stretch reads MAASVAAAARRLRRAIRRSPAWR. ATP contacts are provided by residues R110, H128, W210, and 240 to 242; that span reads LWN. Positions 242 and 265 each coordinate L-alanine. Position 269 (G269) interacts with ATP. Positions 632, 636, 749, and 753 each coordinate Zn(2+).

The protein belongs to the class-II aminoacyl-tRNA synthetase family. As to quaternary structure, monomer. The cofactor is Zn(2+).

It localises to the mitochondrion. The catalysed reaction is tRNA(Ala) + L-alanine + ATP = L-alanyl-tRNA(Ala) + AMP + diphosphate. It carries out the reaction (S)-lactate + ATP + H(+) = (S)-lactoyl-AMP + diphosphate. It catalyses the reaction (S)-lactoyl-AMP + L-lysyl-[protein] = N(6)-[(S)-lactoyl]-L-lysyl-[protein] + AMP + 2 H(+). Functionally, catalyzes the attachment of alanine to tRNA(Ala) in a two-step reaction: alanine is first activated by ATP to form Ala-AMP and then transferred to the acceptor end of tRNA(Ala). Also edits incorrectly charged tRNA(Ala) via its editing domain. In presence of high levels of lactate, also acts as a protein lactyltransferase that mediates lactylation of lysine residues in target proteins, such as CGAS. Acts as an inhibitor of cGAS/STING signaling by catalyzing lactylation of CGAS, preventing the formation of liquid-like droplets in which CGAS is activated. The chain is Alanine--tRNA ligase, mitochondrial from Homo sapiens (Human).